The sequence spans 155 residues: Nuclear cap-binding protein subunit 2 (155 aa).

MRNA contacts are provided by residues Tyr19, Tyr42, 111–115 (RTDWD), 122–126 (RQYGR), and 132–133 (QV). Residues 39–117 (NTLYVGNLSF…RIIRTDWDAG (79 aa)) enclose the RRM domain. The segment at 122–155 (RQYGRGKSGGQVRDEYRQDYDPARGGYGKVVSRP) is disordered. A compositionally biased stretch (basic and acidic residues) spans 133–143 (VRDEYRQDYDP).

The protein belongs to the RRM NCBP2 family. As to quaternary structure, component of the nuclear cap-binding complex (CBC), a heterodimer composed of ncbp1/cbp80 and ncbp2/cbp20 that interacts with m7GpppG-capped RNA.

Its subcellular location is the nucleus. It is found in the cytoplasm. Functionally, component of the cap-binding complex (CBC), which binds co-transcriptionally to the 5' cap of pre-mRNAs and is involved in various processes such as pre-mRNA splicing, translation regulation, nonsense-mediated mRNA decay, RNA-mediated gene silencing (RNAi) by microRNAs (miRNAs) and mRNA export. The CBC complex is involved in mRNA export from the nucleus, leading to the recruitment of the mRNA export machinery to the 5' end of mRNA and to mRNA export in a 5' to 3' direction through the nuclear pore. The CBC complex is also involved in mediating U snRNA and intronless mRNAs export from the nucleus. The CBC complex is essential for a pioneer round of mRNA translation, before steady state translation when the CBC complex is replaced by cytoplasmic cap-binding protein eIF4E. The pioneer round of mRNA translation mediated by the CBC complex plays a central role in nonsense-mediated mRNA decay (NMD), NMD only taking place in mRNAs bound to the CBC complex, but not on eIF4E-bound mRNAs. The CBC complex enhances NMD in mRNAs containing at least one exon-junction complex (EJC), promoting the interaction between upf1 and upf2. The CBC complex is also involved in 'failsafe' NMD, which is independent of the EJC complex, while it does not participate in Staufen-mediated mRNA decay (SMD). During cell proliferation, the CBC complex is also involved in microRNAs (miRNAs) biogenesis via its interaction with srrt/ars2, thereby being required for miRNA-mediated RNA interference. The CBC complex also acts as a negative regulator of parn, thereby acting as an inhibitor of mRNA deadenylation. In the CBC complex, ncbp2/cbp20 recognizes and binds capped RNAs (m7GpppG-capped RNA) but requires ncbp1/cbp80 to stabilize the movement of its N-terminal loop and lock the CBC into a high affinity cap-binding state with the cap structure. The conventional cap-binding complex with NCBP2 binds both small nuclear RNA (snRNA) and messenger (mRNA) and is involved in their export from the nucleus. The polypeptide is Nuclear cap-binding protein subunit 2 (ncbp2) (Salmo salar (Atlantic salmon)).